The sequence spans 85 residues: SKP1-like protein 6 (85 aa).

Positions 65–85 (MMAANYLNIQSLLDLTFSNCR) are interaction with the F-box domain of F-box proteins.

This sequence belongs to the SKP1 family. Part of a SCF (SKP1-cullin-F-box) protein ligase complex.

It localises to the nucleus. It participates in protein modification; protein ubiquitination. In terms of biological role, involved in ubiquitination and subsequent proteasomal degradation of target proteins. Together with CUL1, RBX1 and a F-box protein, it forms a SCF E3 ubiquitin ligase complex. The functional specificity of this complex depends on the type of F-box protein. In the SCF complex, it serves as an adapter that links the F-box protein to CUL1. The polypeptide is SKP1-like protein 6 (ASK6) (Arabidopsis thaliana (Mouse-ear cress)).